Reading from the N-terminus, the 434-residue chain is (3,5-dihydroxyphenyl)acetyl-CoA 1,2-dioxygenase (434 aa).

Substrate contacts are provided by residues aspartate 184, glutamate 190, 223-226 (HPRY), 234-239 (AGINLK), glycine 293, 322-324 (IPG), and glutamine 413.

The protein belongs to the enoyl-CoA hydratase/isomerase family. As to quaternary structure, homohexamer; dimer of trimers.

It carries out the reaction (3,5-dihydroxyphenyl)acetyl-CoA + O2 = 2-(3,5-dihydroxyphenyl)-2-oxoacetate + CoA + H(+). Its function is as follows. Involved in the biosynthesis of the nonproteinogenic amino acid monomer (S)-3,5-dihydroxyphenylglycine (Dpg) responsible of the production of vancomycin and teicoplanin antibiotics. Catalyzes the unusual conversion 3,5-dihydroxyphenylacetyl-CoA (DPA-CoA) to 3,5-dihydroxyphenylglyoxylate. DpgC performed a net four-electron oxidation of the benzylic carbon of DPA-CoA and the hydrolysis of the thioester bond to generate free CoA. It can also use phenylacetyl-CoA (PA-CoA) as substrate. The protein is (3,5-dihydroxyphenyl)acetyl-CoA 1,2-dioxygenase (dpgC) of Amycolatopsis orientalis (Nocardia orientalis).